Reading from the N-terminus, the 520-residue chain is Transactivator/viroplasmin protein (520 aa).

A disordered region spans residues 486-520; sequence VQDASADSGPKDGPPPTRSIVEKEDVPTTSSKQVD.

The protein belongs to the caulimoviridae viroplasmin family.

The protein resides in the host cytoplasm. Its function is as follows. Enhances the ribosomal termination-reinitiation event leading to the translation of major open reading frames on the polycistronic viral RNAs. This Cauliflower mosaic virus (strain BBC) (CaMV) protein is Transactivator/viroplasmin protein.